A 579-amino-acid polypeptide reads, in one-letter code: MTDQQSRPASPRRRSTQSIADRLALDALYEIAKTFAAAPDPVAEVPQIFNVLSSFLDLRHGVLALLAEPGEGAGVNPYVIAATAFQRSPEAPAADVLPDAVARIVFRSGVPFVSFDLVAEFGAEAVPKRLRDAGQTLIAVPLRDPERSHFVLGVLAAYRSHDHNRSGFSDADVRVLTMVASLLEQALRFRRRIARDRERALEDTRRMLQTVTEQRGPAAPVSLDGIVGSSPAIAEVVAQIKRVASTRMPVLLRGESGTGKELFARAVHAQSPRAKGPFIRVNCAALSETLLESELFGHEKGAFTGATALKKGRFELADGGTLFLDEIGEISPAFQSKLLRVLQEGEFERVGGAKTIKVDTRIVAATNRDLEDAVARGQFRADLYFRICVVPIVLPPLRNRKSDIKPLAQLFLDRFNKQNATNVKFAADAFDQICRCQFPGNVRELENCVNRAAALSDGAIVLAEELACRQGACLSAELFRLQDGTSPIGGLAVGRVITPTVRVSAPPPEPAPAPEPAPEAPPREEVPLRTKTAQLSREELLRALESAGWVQAKAARLLGMTPRQIAYALQKFEIELRKI.

A GAF domain is found at 40-187 (DPVAEVPQIF…MVASLLEQAL (148 aa)). The Sigma-54 factor interaction domain maps to 226–454 (IVGSSPAIAE…LENCVNRAAA (229 aa)). Residues 254-261 (GESGTGKE) and 317-326 (ADGGTLFLDE) each bind ATP. Residues 464–536 (EELACRQGAC…PLRTKTAQLS (73 aa)) are inter-domain linker. A divalent metal cation-binding residues include Cys-468 and Cys-473. Positions 502–529 (RVSAPPPEPAPAPEPAPEAPPREEVPLR) are disordered. Tandem repeats lie at residues 505 to 506 (AP), 507 to 508 (PP), 509 to 510 (EP), 511 to 512 (AP), 513 to 514 (AP), 515 to 516 (EP), and 517 to 518 (AP). Residues 505 to 518 (APPPEPAPAPEPAP) are 7 X 2 AA tandem repeats of X-P. A compositionally biased stretch (pro residues) spans 505-520 (APPPEPAPAPEPAPEA). The tract at residues 537 to 579 (REELLRALESAGWVQAKAARLLGMTPRQIAYALQKFEIELRKI) is C-terminal DNA-binding domain. A DNA-binding region (H-T-H motif) is located at residues 551 to 570 (QAKAARLLGMTPRQIAYALQ).

In terms of assembly, interacts with sigma-54.

In terms of biological role, required for activation of most nif operons, which are directly involved in nitrogen fixation. This chain is Nif-specific regulatory protein (nifA1), found in Rhodobacter capsulatus (Rhodopseudomonas capsulata).